Reading from the N-terminus, the 702-residue chain is Elongation factor G (702 aa).

One can recognise a tr-type G domain in the interval 8-286; sequence DKVRNIGIIA…AVVEYLPSPL (279 aa). Residues 17-24, 85-89, and 139-142 each bind GTP; these read AHIDAGKT, DTPGH, and NKMD.

Belongs to the TRAFAC class translation factor GTPase superfamily. Classic translation factor GTPase family. EF-G/EF-2 subfamily.

The protein localises to the cytoplasm. Functionally, catalyzes the GTP-dependent ribosomal translocation step during translation elongation. During this step, the ribosome changes from the pre-translocational (PRE) to the post-translocational (POST) state as the newly formed A-site-bound peptidyl-tRNA and P-site-bound deacylated tRNA move to the P and E sites, respectively. Catalyzes the coordinated movement of the two tRNA molecules, the mRNA and conformational changes in the ribosome. The polypeptide is Elongation factor G (Chloroflexus aurantiacus (strain ATCC 29366 / DSM 635 / J-10-fl)).